The chain runs to 312 residues: Aspartate carbamoyltransferase catalytic subunit (312 aa).

2 residues coordinate carbamoyl phosphate: R55 and T56. K83 is a binding site for L-aspartate. Carbamoyl phosphate-binding residues include R105, H138, and Q141. L-aspartate contacts are provided by R171 and R225. G266 and P267 together coordinate carbamoyl phosphate.

It belongs to the aspartate/ornithine carbamoyltransferase superfamily. ATCase family. Heterododecamer (2C3:3R2) of six catalytic PyrB chains organized as two trimers (C3), and six regulatory PyrI chains organized as three dimers (R2).

The enzyme catalyses carbamoyl phosphate + L-aspartate = N-carbamoyl-L-aspartate + phosphate + H(+). Its pathway is pyrimidine metabolism; UMP biosynthesis via de novo pathway; (S)-dihydroorotate from bicarbonate: step 2/3. Its function is as follows. Catalyzes the condensation of carbamoyl phosphate and aspartate to form carbamoyl aspartate and inorganic phosphate, the committed step in the de novo pyrimidine nucleotide biosynthesis pathway. This is Aspartate carbamoyltransferase catalytic subunit from Corynebacterium efficiens (strain DSM 44549 / YS-314 / AJ 12310 / JCM 11189 / NBRC 100395).